The sequence spans 251 residues: Hydroxyacylglutathione hydrolase (251 aa).

Positions 53, 55, 57, 58, 110, 127, and 165 each coordinate Zn(2+).

It belongs to the metallo-beta-lactamase superfamily. Glyoxalase II family. As to quaternary structure, monomer. It depends on Zn(2+) as a cofactor.

It catalyses the reaction an S-(2-hydroxyacyl)glutathione + H2O = a 2-hydroxy carboxylate + glutathione + H(+). It functions in the pathway secondary metabolite metabolism; methylglyoxal degradation; (R)-lactate from methylglyoxal: step 2/2. In terms of biological role, thiolesterase that catalyzes the hydrolysis of S-D-lactoyl-glutathione to form glutathione and D-lactic acid. The chain is Hydroxyacylglutathione hydrolase from Salmonella paratyphi C (strain RKS4594).